Consider the following 280-residue polypeptide: MALKSYKPTTPGQRGLVLIDRSELWKGRPVKSLTEGLSKKGGRNNTGRITMRRRGGGAKRLYRIVDFKRRKFDVEGVITRIEYDPNRTAFIALVTYTDGEQAYILAPQRTAVGDKVVASQKADIKPGNAMPFSGMPIGTIVHNIELKPGKGGQIARAAGTYAQFVGRDGGYAQIRLSSGELRLVRQECMATVGAVSNPDNSNQNLGKAGRNRHKGIRPSVRGVVMNPVDHPHGGGEGRTSGGRHPVTPWGKPTKGARTRNKNKASSKLIIRSRHAKKKGR.

The segment at 223-280 (VVMNPVDHPHGGGEGRTSGGRHPVTPWGKPTKGARTRNKNKASSKLIIRSRHAKKKGR) is disordered. Positions 254-280 (KGARTRNKNKASSKLIIRSRHAKKKGR) are enriched in basic residues.

It belongs to the universal ribosomal protein uL2 family. In terms of assembly, part of the 50S ribosomal subunit. Forms a bridge to the 30S subunit in the 70S ribosome.

In terms of biological role, one of the primary rRNA binding proteins. Required for association of the 30S and 50S subunits to form the 70S ribosome, for tRNA binding and peptide bond formation. It has been suggested to have peptidyltransferase activity; this is somewhat controversial. Makes several contacts with the 16S rRNA in the 70S ribosome. The chain is Large ribosomal subunit protein uL2 from Dinoroseobacter shibae (strain DSM 16493 / NCIMB 14021 / DFL 12).